Reading from the N-terminus, the 417-residue chain is Inhibitor of growth protein 3 (417 aa).

3 disordered regions span residues 126 to 165, 177 to 198, and 284 to 320; these read LDTP…SEKK, SDAS…STNN, and QTLT…SSSL. Residues 136–152 show a composition bias toward basic residues; it reads HHVHSHSLGEKRKHNPS. Residues 156–165 are compositionally biased toward basic and acidic residues; that stretch reads STTDHVSEKK. Residues 177–187 are compositionally biased toward polar residues; it reads SDASKENTAGC. Low complexity-rich tracts occupy residues 189–198, 284–294, and 303–320; these read NNLSSSSTNN, QTLTSSATTDS, and NNKS…SSSL. The PHD-type zinc-finger motif lies at 359 to 408; the sequence is PRYCICNQVSYGEMVGCDNQDCPIEWFHYGCVGLSEAPKGKWYCPQCTAA. Zn(2+)-binding residues include Cys362, Cys364, Cys375, Cys380, His386, Cys389, Cys402, and Cys405.

It belongs to the ING family. As to quaternary structure, interacts with H3K4me3 and to a lesser extent with H3K4me2. Component of the NuA4 histone acetyltransferase complex.

The protein resides in the nucleus. Functionally, component of the NuA4 histone acetyltransferase (HAT) complex which is involved in transcriptional activation of select genes principally by acetylation of nucleosomal histone H4 and H2A. This modification may both alter nucleosome - DNA interactions and promote interaction of the modified histones with other proteins which positively regulate transcription. NuA4 may also play a direct role in DNA repair when directly recruited to sites of DNA damage. In Xenopus tropicalis (Western clawed frog), this protein is Inhibitor of growth protein 3 (ing3).